A 593-amino-acid chain; its full sequence is Translocon at the outer membrane of chloroplasts 64 (593 aa).

The Chloroplast intermembrane segment spans residues 1–4; it reads MKSM. Residues 5-25 traverse the membrane as a helical segment; sequence ASPSSQIWVILGLGLAGIYVL. Residues 26-144 lie on the Cytoplasmic side of the membrane; it reads TRKLTQAVKE…NPAVPNRVPG (119 aa). A helical transmembrane segment spans residues 145–165; that stretch reads GSSSGAAVAVAANFVDFSLGV. Residues 166-403 are Chloroplast intermembrane-facing; that stretch reads DTSGGVRVPA…LSHDYQSRAL (238 aa). The helical transmembrane segment at 404 to 424 threads the bilayer; sequence SLLSIASISGCCQVTVPLGFF. Residues 425 to 593 lie on the Cytoplasmic side of the membrane; the sequence is DKNPVSVSLI…SAERLRKLFQ (169 aa). TPR repeat units lie at residues 477–510, 511–544, and 545–578; these read AEISKEKGNQAYKDKQWQKAIGFYTEAIKLCGNN, ATYYSNRAQAYLELGSYLQAEEDCTTAISFDKKN, and VKAYFRRGTAREMLGYYKEAIDDFKYALVLEPTN.

Part of the Toc complex and of the intermembrane space complex. Interacts with TOC12, TIC22 and with the cytosolic domain of TOC34 in a GTP dependent manner. Interacts (via TPR region) with HSP90 and with HSP70 with low efficiency.

The protein localises to the plastid. It is found in the chloroplast outer membrane. Its function is as follows. Chaperone receptor mediating Hsp90-dependent protein targeting to chloroplasts. Bi-functional preprotein receptor acting on both sides of the membrane. This chain is Translocon at the outer membrane of chloroplasts 64 (TOC64), found in Pisum sativum (Garden pea).